Here is a 350-residue protein sequence, read N- to C-terminus: Lipoyl synthase, mitochondrial (350 aa).

Residues Cys-83, Cys-88, Cys-94, Cys-113, Cys-117, Cys-120, and Ser-328 each contribute to the [4Fe-4S] cluster site. The Radical SAM core domain maps to 96–317; that stretch reads GGESGTATAT…EKVGNELGFA (222 aa).

This sequence belongs to the radical SAM superfamily. Lipoyl synthase family. [4Fe-4S] cluster is required as a cofactor.

The protein localises to the mitochondrion. The enzyme catalyses [[Fe-S] cluster scaffold protein carrying a second [4Fe-4S](2+) cluster] + N(6)-octanoyl-L-lysyl-[protein] + 2 oxidized [2Fe-2S]-[ferredoxin] + 2 S-adenosyl-L-methionine + 4 H(+) = [[Fe-S] cluster scaffold protein] + N(6)-[(R)-dihydrolipoyl]-L-lysyl-[protein] + 4 Fe(3+) + 2 hydrogen sulfide + 2 5'-deoxyadenosine + 2 L-methionine + 2 reduced [2Fe-2S]-[ferredoxin]. Its pathway is protein modification; protein lipoylation via endogenous pathway; protein N(6)-(lipoyl)lysine from octanoyl-[acyl-carrier-protein]: step 2/2. In terms of biological role, catalyzes the radical-mediated insertion of two sulfur atoms into the C-6 and C-8 positions of the octanoyl moiety bound to the lipoyl domains of lipoate-dependent enzymes, thereby converting the octanoylated domains into lipoylated derivatives. The polypeptide is Lipoyl synthase, mitochondrial (Trichoplax adhaerens (Trichoplax reptans)).